The primary structure comprises 776 residues: MASLIYRQLLTNSYTVELSDEIQEIGSTKTQNVTVNPGPFAQTNYASVNWGPGETNDSTTVEPVLDGPYQPTTFNPPVSYWMLLAPTNAGVVDQGTNNTNRWLATILIKPNVQQVERTYTLFGQQVQVTVSNDSQTKWKFVDLSKQTQDGNYSQHGPLLSTPKLYGVMKHGGKIYTYNGETPNATTGYYSTTNFDTVNMTAYCDFYIIPLAQEAKCTEYINNGLPPIQNTRNIVPVSIVSRNIVYTRAQPNQDIVVSKTSLWKEMQYNRDIVIRFKFANSIIKSGGLGYKWSEVSFKPANYQYTYTRDGEEVTAHTTCSVNGINDFNYNGGSLPTDFVISKYEVIKENSFVYIDYWDDSQAFRNMVYVRSLAADLNSVMCTGGDYSFAIPVGNYPVMTGGAVSLHSAGVTLSTQFTDFVSLNSLRFRFRLSVEEPPFSILRTRVSGLYGLPAAKPNNSQEYYEIAGRFSLISLVPSNDDYQTPIINSVTVRQDLERQLGELRDEFNNLSQQIAMSQLIDLALLPLDMFSMFSGIKSTIDAAKSMATNVMKRFKKSSLANSVSTLTDSLSDAASSISRSASVRSVSSTASAWTEVSNITSDINVTTSSISTQTSTISRRLRLKEMATQTDGMNFDDISAAVLKTKIDKSTQLNTNTLPEIVTEASEKFIPNRAYRVIKDDEVLEASTDGKYFAYKVETILKRFHSMYKFADLVTDSPVISAIIDFKTLKNLNDNYGISRQQALNLLRSDPRVLREFINQDNPIIRNRIESLIMQCRL.

Residues 65 to 224 are spike head; that stretch reads LDGPYQPTTF…KCTEYINNGL (160 aa). A disulfide bond links Cys203 and Cys216. The interval 248 to 479 is spike body and stalk (antigen domain); the sequence is AQPNQDIVVS…LISLVPSNDD (232 aa). Residues 308 to 310 carry the DGE motif; interaction with ITGA2/ITGB1 heterodimer motif; the sequence is DGE. The cysteines at positions 318 and 380 are disulfide-linked. The segment at 389–409 is hydrophobic; possible role in virus entry into host cell; sequence IPVGNYPVMTGGAVSLHSAGV. The YGL motif; interaction with ITGA4 signature appears at 448 to 450; that stretch reads YGL. Residues 484–518 adopt a coiled-coil conformation; it reads IINSVTVRQDLERQLGELRDEFNNLSQQIAMSQLI. Positions 510 to 776 are spike foot; sequence QQIAMSQLID…IESLIMQCRL (267 aa). The short motif at 644–646 is the KID motif; interaction with HSPA8 element; it reads KID.

Belongs to the rotavirus VP4 family. Homotrimer. VP4 adopts a dimeric appearance above the capsid surface, while forming a trimeric base anchored inside the capsid layer. Only hints of the third molecule are observed above the capsid surface. It probably performs a series of molecular rearrangements during viral entry. Prior to trypsin cleavage, it is flexible. The priming trypsin cleavage triggers its rearrangement into rigid spikes with approximate two-fold symmetry of their protruding parts. After an unknown second triggering event, cleaved VP4 may undergo another rearrangement, in which two VP5* subunits fold back on themselves and join a third subunit to form a tightly associated trimer, shaped like a folded umbrella. Interacts with VP6. Interacts with VP7. As to quaternary structure, homotrimer. The trimer is coiled-coil stabilized by its C-terminus, however, its N-terminus, known as antigen domain or 'body', seems to be flexible allowing it to self-associate either as a dimer or a trimer. In terms of processing, proteolytic cleavage by trypsin results in activation of VP4 functions and greatly increases infectivity. The penetration into the host cell is dependent on trypsin treatment of VP4. It produces two peptides, VP5* and VP8* that remain associated with the virion. Cleavage of VP4 by trypsin probably occurs in vivo in the lumen of the intestine prior to infection of enterocytes. Trypsin seems to be incorporated into the three-layered viral particles but remains inactive as long as the viral outer capsid is intact and would only be activated upon the solubilization of the latter.

The protein resides in the virion. The protein localises to the host rough endoplasmic reticulum. Its subcellular location is the host cell membrane. It localises to the host cytoplasm. It is found in the host cytoskeleton. The protein resides in the host endoplasmic reticulum-Golgi intermediate compartment. Spike-forming protein that mediates virion attachment to the host epithelial cell receptors and plays a major role in cell penetration, determination of host range restriction and virulence. Rotavirus attachment and entry into the host cell probably involves multiple sequential contacts between the outer capsid proteins VP4 and VP7, and the cell receptors. It is subsequently lost, together with VP7, following virus entry into the host cell. Following entry into the host cell, low intracellular or intravesicular Ca(2+) concentration probably causes the calcium-stabilized VP7 trimers to dissociate from the virion. This step is probably necessary for the membrane-disrupting entry step and the release of VP4, which is locked onto the virion by VP7. During the virus exit from the host cell, VP4 seems to be required to target the newly formed virions to the host cell lipid rafts. Its function is as follows. Forms the spike 'foot' and 'body' and acts as a membrane permeabilization protein that mediates release of viral particles from endosomal compartments into the cytoplasm. During entry, the part of VP5* that protrudes from the virus folds back on itself and reorganizes from a local dimer to a trimer. This reorganization may be linked to membrane penetration by exposing VP5* hydrophobic region. In integrin-dependent strains, VP5* targets the integrin heterodimer ITGA2/ITGB1 for cell attachment. Functionally, forms the head of the spikes and mediates the recognition of specific host cell surface glycans. It is the viral hemagglutinin and an important target of neutralizing antibodies. In sialic acid-dependent strains, VP8* binds to host cell sialic acid, most probably a ganglioside, providing the initial contact. In some other strains, VP8* mediates the attachment to histo-blood group antigens (HBGAs) for viral entry. The sequence is that of Outer capsid protein VP4 from Rotavirus A (strain RVA/Cow/Canada/C486/1977/G6P6[1]) (RV-A).